Reading from the N-terminus, the 150-residue chain is Large-conductance mechanosensitive channel (150 aa).

Transmembrane regions (helical) follow at residues 14-34 (VIDL…VTSL) and 81-101 (GLFI…FIVI).

It belongs to the MscL family. Homopentamer.

The protein localises to the cell membrane. Channel that opens in response to stretch forces in the membrane lipid bilayer. May participate in the regulation of osmotic pressure changes within the cell. This chain is Large-conductance mechanosensitive channel, found in Desulfitobacterium hafniense (strain DSM 10664 / DCB-2).